We begin with the raw amino-acid sequence, 502 residues long: MRKAAALASAAMAAAAVAVVSTVLHQRQRRAAKRSERAEAVLLRDLQERCAAPVELLRQVADAMAAEMRAGLAAEGGSDLQMLVTYVDSLPSGGEKGMFYALDLGGTNFRVLRVQLGGKERRIIKQDSEGISIPQHLMSSSSHELFDFVAVALAKFVASEGEDCHLPEGTQRELGFTFSFPVKQKSLASGTLIKWTKSFAIDEMVGKDVVAELNMAIRSQGLDMKVTALVNDTVGTLAAGRYVNHDTIAAVILGTGSNAAYIDHADAIPKWHGSLPKSGNMVINMEWGNFKSSHLPLTEFDQELDAESLNPGKQVYEKSISGMYMGELVRRILLKMAQETRIFGDNIPPKLERPYILRTLDMLIMHHDTSSDLRTVANKLKEVLGIEYTSFTTRKLVLDVCEAIATRGARLAAAGIYGIIQKLGQHSDSPSTRRSVIAVDGGVYKYYTFFSQCMESTLSDMLGQELAPSVMIKHVNDGSGVGAALLAASYSQYHQAESADSS.

A helical membrane pass occupies residues 5–24 (AALASAAMAAAAVAVVSTVL). The Hexokinase domain maps to 37 to 488 (RAEAVLLRDL…SGVGAALLAA (452 aa)). Positions 92 to 230 (SGGEKGMFYA…GLDMKVTALV (139 aa)) are hexokinase small subdomain. ADP contacts are provided by G106, T107, and N108. D-glucose-binding residues include T196, K197, N231, and D232. The segment at 231-477 (NDTVGTLAAG…PSVMIKHVND (247 aa)) is hexokinase large subdomain. Residue T255 participates in ADP binding. Residues N258, E286, and E317 each contribute to the D-glucose site. An ADP-binding site is contributed by G442.

The protein belongs to the hexokinase family. As to expression, expressed in roots, leaves, flowers, immature seeds, endosperm and seed coat.

Its subcellular location is the plastid. The protein resides in the chloroplast outer membrane. It carries out the reaction a D-hexose + ATP = a D-hexose 6-phosphate + ADP + H(+). The enzyme catalyses D-fructose + ATP = D-fructose 6-phosphate + ADP + H(+). The catalysed reaction is D-glucose + ATP = D-glucose 6-phosphate + ADP + H(+). The protein operates within carbohydrate metabolism; hexose metabolism. It functions in the pathway carbohydrate degradation; glycolysis; D-glyceraldehyde 3-phosphate and glycerone phosphate from D-glucose: step 1/4. Its function is as follows. Fructose and glucose phosphorylating enzyme. The protein is Hexokinase-9 (HXK9) of Oryza sativa subsp. japonica (Rice).